A 125-amino-acid polypeptide reads, in one-letter code: Holo-[acyl-carrier-protein] synthase (125 aa).

Positions 8 and 56 each coordinate Mg(2+).

The protein belongs to the P-Pant transferase superfamily. AcpS family. Requires Mg(2+) as cofactor.

The protein resides in the cytoplasm. It catalyses the reaction apo-[ACP] + CoA = holo-[ACP] + adenosine 3',5'-bisphosphate + H(+). Its function is as follows. Transfers the 4'-phosphopantetheine moiety from coenzyme A to a Ser of acyl-carrier-protein. The sequence is that of Holo-[acyl-carrier-protein] synthase from Borrelia hermsii (strain HS1 / DAH).